A 286-amino-acid polypeptide reads, in one-letter code: Beta-lactamase SHV-5 (286 aa).

The N-terminal stretch at 1-21 (MRYIRLCIISLLATLPLAVHA) is a signal peptide. Ser66 functions as the Acyl-ester intermediate in the catalytic mechanism. Cys73 and Cys119 are disulfide-bonded. Glu164 acts as the Proton acceptor in catalysis. A substrate-binding site is contributed by 230-232 (KTG).

It belongs to the class-A beta-lactamase family.

It catalyses the reaction a beta-lactam + H2O = a substituted beta-amino acid. SHV enzymes hydrolyze broad spectrum cephalosporins notably cefotaxime and ceftazidime. SHV-5 causes particularly high levels of resistance to aztreonam and ceftazidime. The protein is Beta-lactamase SHV-5 (bla) of Klebsiella pneumoniae.